The sequence spans 1077 residues: Teashirt homolog 1 (1077 aa).

Disordered regions lie at residues 1-109, 139-195, and 269-298; these read MPRR…VSYP, SGST…SSSS, and GHYRDDNRDKDSEKTKRWSKPRKRSLMEME. Over residues 26–36 the composition is skewed to acidic residues; it reads IDEEHVEDDGL. 2 stretches are compositionally biased toward polar residues: residues 57–71 and 139–152; these read QSYQNSPVSSATNQD and SGSTTSTNDASQKE. Low complexity predominate over residues 164-195; that stretch reads PVSTTGPTTSTPSTSCSSSTSHSSTTSTSSSS. C2H2-type zinc fingers lie at residues 246–270 and 307–331; these read FRCKDCSAAYDTLVELTVHMNETGH and LKCMYCGHSFESLQDLSVHMIKTKH. The segment covering 269–284 has biased composition (basic and acidic residues); it reads GHYRDDNRDKDSEKTK. The C2H2-type 3; atypical zinc finger occupies 416-440; the sequence is LKCMECGSSHDTLQQLTAHMMVTGH. Disordered stretches follow at residues 467-549 and 647-720; these read SIPL…KGGL and TGKV…EPLK. Basic and acidic residues-rich tracts occupy residues 496–528, 647–665, and 675–708; these read SEEKKEPEKEKPPVAGDAEKIKEESEDSLEKFE, TGKVNIKKEERPPEKEKSS, and KENKDFPKTEEVSGKPQKKGPEAETGKAKKEGPL. Phosphoserine is present on Ser-765. Residues 848 to 873 form a disordered region; sequence TGRLTPKSSTPSTVSEKSDADGSSFE. The span at 853-862 shows a compositional bias: polar residues; the sequence is PKSSTPSTVS. Positions 885–955 form a DNA-binding region, homeobox; atypical; that stretch reads RKGRQSNWNP…NVKYQLRRTG (71 aa). 2 consecutive C2H2-type zinc fingers follow at residues 970-992 and 1037-1060; these read FFCNDCASQFRTASTYISHLETH and FQCKLCNRTFASKHAVKLHLSKTH.

Belongs to the teashirt C2H2-type zinc-finger protein family. In terms of assembly, interacts (via homeobox domain) with APBB1 (via PID domain 1). Expressed in brain; strongly reduced in post-mortem elderly subjects with Alzheimer disease.

Its subcellular location is the nucleus. In terms of biological role, probable transcriptional regulator involved in developmental processes. May act as a transcriptional repressor (Potential). This Homo sapiens (Human) protein is Teashirt homolog 1 (TSHZ1).